Here is a 449-residue protein sequence, read N- to C-terminus: Plasmepsin IV (449 aa).

Topologically, residues 1–37 are cytoplasmic; the sequence is MALTVKEEEFSNTLIKNASAFDRLKLGNLKNLKIQKK. Residues 1–121 constitute a propeptide that is removed on maturation; the sequence is MALTVKEEEF…SGYAQKGYLG (121 aa). The chain crosses the membrane as a helical; Signal-anchor for type II membrane protein span at residues 38–58; sequence LQFLYLILFVLITGVFFFFLI. Over 59 to 449 the chain is Lumenal; sequence GNFYSHRKLY…SVGFAVAKNL (391 aa). The 308-residue stretch at 137 to 444 folds into the Peptidase A1 domain; that stretch reads FYGEGQIGTN…DYEKESVGFA (308 aa). The active site involves aspartate 155. Cysteine 168 and cysteine 173 are oxidised to a cystine. Residue aspartate 335 is part of the active site. Cysteine 370 and cysteine 406 form a disulfide bridge.

Belongs to the peptidase A1 family. In terms of assembly, component of the hemozoin formation complex (HFC) composed of falcipains FP2A and/or FP2B, plasmepsins PMII, PMIII/HAP and PMIV, heme detoxifying protein HDP and falcilysin FLN. The HFC complex is involved in hemoglobin degradation and detoxification of heme in the food vacuole during the asexual blood stage. Post-translationally, proteolytically cleaved into the soluble active mature form by cysteine proteases in the digestive vacuole of trophozoites. Proteolysis requires an acidic environment. Autoprocessing or transprocessing by other plasmepsins such as PMII may serve as an alternate activation system.

It is found in the membrane. It localises to the vacuole lumen. The catalysed reaction is Hydrolysis of the bonds linking certain hydrophobic residues in hemoglobin or globin. Also cleaves small molecules substrates such as Ala-Leu-Glu-Arg-Thr-Phe-|-Phe(NO2)-Ser-Phe-Pro-Thr.. With respect to regulation, inhibited by KNI derived compounds KNI-10333 and to a lesser extent KNI-10743. Functionally, during the asexual blood stage, catalyzes the cleavage of denatured host hemoglobin (Hb). Digestion of host Hb is an essential step which provides the parasite with amino acids for protein synthesis, and regulates osmolarity. The sequence is that of Plasmepsin IV from Plasmodium falciparum (isolate 3D7).